Here is a 501-residue protein sequence, read N- to C-terminus: Glutamyl-tRNA(Gln) amidotransferase subunit A (501 aa).

Active-site charge relay system residues include Lys-84 and Ser-159. Catalysis depends on Ser-183, which acts as the Acyl-ester intermediate.

It belongs to the amidase family. GatA subfamily. In terms of assembly, heterotrimer of A, B and C subunits.

It carries out the reaction L-glutamyl-tRNA(Gln) + L-glutamine + ATP + H2O = L-glutaminyl-tRNA(Gln) + L-glutamate + ADP + phosphate + H(+). Its function is as follows. Allows the formation of correctly charged Gln-tRNA(Gln) through the transamidation of misacylated Glu-tRNA(Gln) in organisms which lack glutaminyl-tRNA synthetase. The reaction takes place in the presence of glutamine and ATP through an activated gamma-phospho-Glu-tRNA(Gln). The sequence is that of Glutamyl-tRNA(Gln) amidotransferase subunit A from Streptomyces avermitilis (strain ATCC 31267 / DSM 46492 / JCM 5070 / NBRC 14893 / NCIMB 12804 / NRRL 8165 / MA-4680).